The following is a 146-amino-acid chain: Large ribosomal subunit protein uL16c (146 aa).

Belongs to the universal ribosomal protein uL16 family. In terms of assembly, part of the 50S ribosomal subunit.

It localises to the plastid. It is found in the chloroplast. The protein is Large ribosomal subunit protein uL16c of Angiopteris evecta (Mule's foot fern).